A 396-amino-acid polypeptide reads, in one-letter code: Elongation factor Tu (396 aa).

Residues 10-205 (KSHANIGTIG…AVDEYIPTPE (196 aa)) form the tr-type G domain. Residues 19–26 (GHVDHGKT) are G1. 19-26 (GHVDHGKT) is a binding site for GTP. Threonine 26 lines the Mg(2+) pocket. The tract at residues 61 to 65 (GITIS) is G2. A G3 region spans residues 82–85 (DCPG). Residues 82–86 (DCPGH) and 137–140 (NKCD) each bind GTP. The segment at 137–140 (NKCD) is G4. The segment at 175 to 177 (SAL) is G5.

Belongs to the TRAFAC class translation factor GTPase superfamily. Classic translation factor GTPase family. EF-Tu/EF-1A subfamily. In terms of assembly, monomer.

It localises to the cytoplasm. It catalyses the reaction GTP + H2O = GDP + phosphate + H(+). Functionally, GTP hydrolase that promotes the GTP-dependent binding of aminoacyl-tRNA to the A-site of ribosomes during protein biosynthesis. The protein is Elongation factor Tu of Bacillus velezensis (strain DSM 23117 / BGSC 10A6 / LMG 26770 / FZB42) (Bacillus amyloliquefaciens subsp. plantarum).